The primary structure comprises 149 residues: D-aminoacyl-tRNA deacylase (149 aa).

Residues 137-138 (GP) carry the Gly-cisPro motif, important for rejection of L-amino acids motif.

This sequence belongs to the DTD family. As to quaternary structure, homodimer.

Its subcellular location is the cytoplasm. The enzyme catalyses glycyl-tRNA(Ala) + H2O = tRNA(Ala) + glycine + H(+). It carries out the reaction a D-aminoacyl-tRNA + H2O = a tRNA + a D-alpha-amino acid + H(+). An aminoacyl-tRNA editing enzyme that deacylates mischarged D-aminoacyl-tRNAs. Also deacylates mischarged glycyl-tRNA(Ala), protecting cells against glycine mischarging by AlaRS. Acts via tRNA-based rather than protein-based catalysis; rejects L-amino acids rather than detecting D-amino acids in the active site. By recycling D-aminoacyl-tRNA to D-amino acids and free tRNA molecules, this enzyme counteracts the toxicity associated with the formation of D-aminoacyl-tRNA entities in vivo and helps enforce protein L-homochirality. The polypeptide is D-aminoacyl-tRNA deacylase (Clostridium botulinum (strain 657 / Type Ba4)).